Here is a 953-residue protein sequence, read N- to C-terminus: Eukaryotic translation initiation factor 3 subunit A (953 aa).

The PCI domain occupies 323–504 (LQKMASHVLL…KSISFGLDLH (182 aa)). Coiled-coil stretches lie at residues 593-642 (QERE…KRQA), 670-704 (MNAD…VDYF), and 732-877 (ENQE…LEER). The segment at 603 to 623 (IKKQKVENQEAEQKRLDEERR) is disordered. Disordered regions lie at residues 810-861 (ERKK…EIDR) and 893-953 (GWGD…ITMS). 3 stretches are compositionally biased toward basic and acidic residues: residues 812–861 (KKIE…EIDR), 895–919 (GDHE…RGGD), and 928–953 (WQRE…ITMS).

This sequence belongs to the eIF-3 subunit A family. As to quaternary structure, component of the eukaryotic translation initiation factor 3 (eIF-3) complex.

The protein resides in the cytoplasm. In terms of biological role, RNA-binding component of the eukaryotic translation initiation factor 3 (eIF-3) complex, which is involved in protein synthesis of a specialized repertoire of mRNAs and, together with other initiation factors, stimulates binding of mRNA and methionyl-tRNAi to the 40S ribosome. The eIF-3 complex specifically targets and initiates translation of a subset of mRNAs involved in cell proliferation. This is Eukaryotic translation initiation factor 3 subunit A from Nematostella vectensis (Starlet sea anemone).